The sequence spans 255 residues: Cytosolic Fe-S cluster assembly factor Nubp2 homolog (255 aa).

14-21 (GKGGVGKS) is a binding site for ATP. Positions 185 and 188 each coordinate [4Fe-4S] cluster.

It belongs to the Mrp/NBP35 ATP-binding proteins family. NUBP2/CFD1 subfamily. Heterotetramer of 2 Nubp1 and 2 Nubp2 chains. The cofactor is [4Fe-4S] cluster.

Its subcellular location is the cytoplasm. Functionally, component of the cytosolic iron-sulfur (Fe/S) protein assembly (CIA) machinery. Required for maturation of extramitochondrial Fe-S proteins. The Nubp1-Nubp2 heterotetramer forms a Fe-S scaffold complex, mediating the de novo assembly of an Fe-S cluster and its transfer to target apoproteins. The sequence is that of Cytosolic Fe-S cluster assembly factor Nubp2 homolog from Drosophila persimilis (Fruit fly).